The chain runs to 91 residues: Small nuclear ribonucleoprotein F (91 aa).

A Sm domain is found at Ala8 to Glu81.

The protein belongs to the snRNP Sm proteins family. SmF/LSm6 subfamily. Core component of the spliceosomal U1, U2, U4 and U5 small nuclear ribonucleoproteins (snRNPs), the building blocks of the spliceosome. Most spliceosomal snRNPs contain a common set of Sm proteins, SNRPB, SNRPD1, SNRPD2, SNRPD3, SNRPE, SNRPF and SNRPG that assemble in a heptameric protein ring on the Sm site of the small nuclear RNA to form the core snRNP. Component of the U1 snRNP. Component of the U4/U6-U5 tri-snRNP complex. Component of the U7 snRNP complex. Component of the U11/U12 snRNPs that are part of the U12-type spliceosome. Part of the SMN-Sm complex that catalyzes core snRNPs assembly.

It localises to the cytoplasm. The protein localises to the cytosol. The protein resides in the nucleus. Its function is as follows. Plays a role in pre-mRNA splicing as a core component of the spliceosomal U1, U2, U4 and U5 small nuclear ribonucleoproteins (snRNPs), the building blocks of the spliceosome. Component of both the pre-catalytic spliceosome B complex and activated spliceosome C complexes. Is also a component of the minor U12 spliceosome. The sequence is that of Small nuclear ribonucleoprotein F (snrpf) from Dictyostelium discoideum (Social amoeba).